The chain runs to 704 residues: Lebercilin (704 aa).

Residues 1–14 (MGERARSPDIEQGK) are compositionally biased toward basic and acidic residues. Residues 1–80 (MGERARSPDI…VSPKAVPSKK (80 aa)) are disordered. The residue at position 7 (S7) is a Phosphoserine. A compositionally biased stretch (low complexity) spans 25–40 (SSDLGSSPQSSGPSSP). At S48 the chain carries Phosphoserine. Over residues 49–63 (TREKNPKRHLSDNQV) the composition is skewed to basic and acidic residues. Positions 105–300 (KRVLSARLLK…KEKELDIKNI (196 aa)) form a coiled coil. Disordered stretches follow at residues 389-417 (QEGK…AREE) and 476-661 (ELQD…GDEE). A compositionally biased stretch (basic and acidic residues) spans 404-417 (QEARKPESEWAREE). A coiled-coil region spans residues 448–479 (AQSVDKFEDEAERLKTEMLLAKLNEINKELQD). The span at 496 to 505 (SKLHSPDRST) shows a compositional bias: basic and acidic residues. The span at 570–591 (GKSNPPSQKSSLLDFQSNSSES) shows a compositional bias: polar residues. A compositionally biased stretch (basic and acidic residues) spans 592-608 (PSKDSLDLMSRKEKKAT). Residues 617–627 (SASNTSVSSKS) are compositionally biased toward low complexity.

Belongs to the LCA5 family. As to quaternary structure, interacts with NINL. Interacts with OFD1. Interacts with FAM161A. Interacts with components of the IFT complex B. In terms of tissue distribution, detected in several tissues.

The protein resides in the cytoplasm. It is found in the cytoskeleton. The protein localises to the cilium axoneme. Its subcellular location is the cilium basal body. It localises to the cell projection. The protein resides in the cilium. In terms of biological role, involved in intraflagellar protein (IFT) transport in photoreceptor cilia. In Mus musculus (Mouse), this protein is Lebercilin (Lca5).